The following is a 169-amino-acid chain: Gastrula zinc finger protein XlCGF62.1 (169 aa).

C2H2-type zinc fingers lie at residues 6-28, 34-56, 62-84, 90-113, 119-141, and 147-169; these read FICTECGKCFSEKRTLKHHIRTH, FICTDCGKCFSFEICLNRHYKTH, FICTECGKSFSDKSRLRVHHRSH, FTCTDCGKCFSVKSILNHHRQAIH, FICTECGKGFASKHYLHGHKRTH, and FVCTECGKGFASNYYLHVHKRTH.

It belongs to the krueppel C2H2-type zinc-finger protein family.

The protein resides in the nucleus. May be involved in transcriptional regulation. The chain is Gastrula zinc finger protein XlCGF62.1 from Xenopus laevis (African clawed frog).